We begin with the raw amino-acid sequence, 702 residues long: Elongation factor G (702 aa).

In terms of domain architecture, tr-type G spans 8–286 (DKVRNIGIIA…AVVEYLPSPL (279 aa)). GTP is bound by residues 17-24 (AHIDAGKT), 85-89 (DTPGH), and 139-142 (NKMD).

The protein belongs to the TRAFAC class translation factor GTPase superfamily. Classic translation factor GTPase family. EF-G/EF-2 subfamily.

It is found in the cytoplasm. Functionally, catalyzes the GTP-dependent ribosomal translocation step during translation elongation. During this step, the ribosome changes from the pre-translocational (PRE) to the post-translocational (POST) state as the newly formed A-site-bound peptidyl-tRNA and P-site-bound deacylated tRNA move to the P and E sites, respectively. Catalyzes the coordinated movement of the two tRNA molecules, the mRNA and conformational changes in the ribosome. The sequence is that of Elongation factor G from Chloroflexus aurantiacus (strain ATCC 29366 / DSM 635 / J-10-fl).